Reading from the N-terminus, the 482-residue chain is Magnesium-dependent glutamate N-prenyltransferase (482 aa).

Residues N351, T355, E359, and F366 each contribute to the Mg(2+) site.

It belongs to the terpene synthase family. The cofactor is Mg(2+).

It catalyses the reaction (2E)-geranyl diphosphate + L-glutamate = N-geranyl-L-glutamate + diphosphate. Its pathway is secondary metabolite biosynthesis. Functionally, magnesium-dependent glutamate N-prenyltransferase: part of the gene cluster that mediates the biosynthesis of domoic acid (DA) and derivatives, natural products with neurochemical activity acting as ionotropic glutamate receptor (iGluR) agonists, thus being neurotoxins causing amnesic shellfish poisoning (ASP). Catalyzes the conversion of L-glutamic acid (L-Glu) to N-geranyl-L-glutamic acid (NGG) in the presence of geranyl diphosphate (GPP). Also able to catalyze the formation of farnesyl-L-glutamate from farnesyl diphosphate (FPP). Cannot use dimethylallyl diphosphate (DMAPP) as substrate. The protein is Magnesium-dependent glutamate N-prenyltransferase of Pseudo-nitzschia multiseries (Marine planktonic diatom).